A 312-amino-acid chain; its full sequence is Ceroid-lipofuscinosis neuronal protein 6 homolog (312 aa).

The segment covering 1–10 has biased composition (basic residues); it reads MEAAARRRQH. The segment at 1-22 is disordered; it reads MEAAARRRQHPGAAGGAGAQPG. Helical transmembrane passes span 57–77, 82–102, 112–132, 178–198, 205–225, 226–246, and 261–281; these read WVLD…WFPL, VGDY…LKLI, SVIY…LVGD, GHCM…SGCF, SSMP…YWYL, VTEG…LALV, and LFLF…VAWL.

Interacts with CRMP2. Interacts with CLN5. Interacts with CLN5. Interacts with CLN3.

Its subcellular location is the endoplasmic reticulum membrane. It localises to the endoplasmic reticulum. The polypeptide is Ceroid-lipofuscinosis neuronal protein 6 homolog (CLN6) (Canis lupus familiaris (Dog)).